Consider the following 382-residue polypeptide: Anhydro-N-acetylmuramic acid kinase (382 aa).

22 to 29 (GTSMDGVD) contributes to the ATP binding site.

Belongs to the anhydro-N-acetylmuramic acid kinase family.

It catalyses the reaction 1,6-anhydro-N-acetyl-beta-muramate + ATP + H2O = N-acetyl-D-muramate 6-phosphate + ADP + H(+). It participates in amino-sugar metabolism; 1,6-anhydro-N-acetylmuramate degradation. Its pathway is cell wall biogenesis; peptidoglycan recycling. Catalyzes the specific phosphorylation of 1,6-anhydro-N-acetylmuramic acid (anhMurNAc) with the simultaneous cleavage of the 1,6-anhydro ring, generating MurNAc-6-P. Is required for the utilization of anhMurNAc either imported from the medium or derived from its own cell wall murein, and thus plays a role in cell wall recycling. This is Anhydro-N-acetylmuramic acid kinase from Burkholderia orbicola (strain AU 1054).